The chain runs to 349 residues: Ion-translocating oxidoreductase complex subunit D (349 aa).

Transmembrane regions (helical) follow at residues 36 to 56, 77 to 99, and 124 to 144; these read CAFFGWGTLIQVLLAIIVALS, SAMLTAILIGVAIPPLAPWWMIV, and AMAAYVLLLVSFPVQMTSWIA. At Thr185 the chain carries FMN phosphoryl threonine. 5 consecutive transmembrane segments (helical) span residues 212-232, 239-259, 265-285, 291-311, and 315-335; these read GTGVGWFWVNLAYLAGGLVLL, WHISTGVLAGLFVASSIGFLL, ASPLFHLFSGATMLAAFFIAT, ATSPRGRLIFGALIGVLVYII, and GGYPDAFAFAVLLANLCAPFI.

It belongs to the NqrB/RnfD family. As to quaternary structure, the complex is composed of six subunits: RnfA, RnfB, RnfC, RnfD, RnfE and RnfG. The cofactor is FMN.

The protein localises to the cell inner membrane. Functionally, part of a membrane-bound complex that couples electron transfer with translocation of ions across the membrane. This Shewanella sp. (strain ANA-3) protein is Ion-translocating oxidoreductase complex subunit D.